Consider the following 250-residue polypeptide: Ubiquinone/menaquinone biosynthesis C-methyltransferase UbiE (250 aa).

S-adenosyl-L-methionine-binding positions include Thr73, Asp94, and 122-123; that span reads DA.

The protein belongs to the class I-like SAM-binding methyltransferase superfamily. MenG/UbiE family.

The enzyme catalyses a 2-demethylmenaquinol + S-adenosyl-L-methionine = a menaquinol + S-adenosyl-L-homocysteine + H(+). The catalysed reaction is a 2-methoxy-6-(all-trans-polyprenyl)benzene-1,4-diol + S-adenosyl-L-methionine = a 5-methoxy-2-methyl-3-(all-trans-polyprenyl)benzene-1,4-diol + S-adenosyl-L-homocysteine + H(+). It participates in quinol/quinone metabolism; menaquinone biosynthesis; menaquinol from 1,4-dihydroxy-2-naphthoate: step 2/2. Its pathway is cofactor biosynthesis; ubiquinone biosynthesis. Functionally, methyltransferase required for the conversion of demethylmenaquinol (DMKH2) to menaquinol (MKH2) and the conversion of 2-polyprenyl-6-methoxy-1,4-benzoquinol (DDMQH2) to 2-polyprenyl-3-methyl-6-methoxy-1,4-benzoquinol (DMQH2). This is Ubiquinone/menaquinone biosynthesis C-methyltransferase UbiE from Coxiella burnetii (strain RSA 331 / Henzerling II).